The primary structure comprises 452 residues: MAANVPPSAETLLSGAAAHPPKTAEEIANQYDLLPKLIPYLDRHLVFPLLEFSSGSQEDDKEMIRAKYELLKHTNMTDYVANLWKEINDSDTIPDEFVKKREEVLAKLQHYQEQSAKITELLQDEDVVGNLRSDKVANLKFLEEEHGVTADMVNSLFDYGRFQYSCGSYGNAAELLYQFRVLSTDNDKVASATWGKLASEILTTSWDGAMEEVQKVKDSIETRLFNNPLGQLQNRSWLIHWSLFPFFNYDPARDVLTDLFFSPAYINTIQTSCPWILRYLAAAVITNRNRAHKNSNVYQKQLKDLIRVVRQEGYEYSDPITDFVKALYVDFDFEEAQKKLGEAEDVLRSDFFLVSAADAFVEAARHLISESYCKIHQRIDIKDLSTRLGLNQDEGEKWIVNLIRDTRVDAKIDYKEGTVIMNHPPQSVYQQVIEKTKGAFFRTQVLSAAVAK.

In terms of domain architecture, PCI spans 257 to 426 (TDLFFSPAYI…GTVIMNHPPQ (170 aa)).

It belongs to the eIF-3 subunit E family. As to quaternary structure, component of the eukaryotic translation initiation factor 3 (eIF-3) complex.

It localises to the cytoplasm. In terms of biological role, component of the eukaryotic translation initiation factor 3 (eIF-3) complex, which is involved in protein synthesis of a specialized repertoire of mRNAs and, together with other initiation factors, stimulates binding of mRNA and methionyl-tRNAi to the 40S ribosome. The eIF-3 complex specifically targets and initiates translation of a subset of mRNAs involved in cell proliferation. This Aspergillus niger (strain ATCC MYA-4892 / CBS 513.88 / FGSC A1513) protein is Eukaryotic translation initiation factor 3 subunit E (int6).